A 315-amino-acid polypeptide reads, in one-letter code: Ribosomal RNA small subunit methyltransferase H (315 aa).

S-adenosyl-L-methionine-binding positions include 37 to 39, D57, D105, and Q112; that span reads GGH.

It belongs to the methyltransferase superfamily. RsmH family.

It localises to the cytoplasm. It carries out the reaction cytidine(1402) in 16S rRNA + S-adenosyl-L-methionine = N(4)-methylcytidine(1402) in 16S rRNA + S-adenosyl-L-homocysteine + H(+). Specifically methylates the N4 position of cytidine in position 1402 (C1402) of 16S rRNA. The sequence is that of Ribosomal RNA small subunit methyltransferase H from Nitrosococcus oceani (strain ATCC 19707 / BCRC 17464 / JCM 30415 / NCIMB 11848 / C-107).